The following is a 349-amino-acid chain: MTAASMGPVRVAFVVLLALCSRPAVGQNCSGPCRCPDEPAPRCPAGVSLVLDGCGCCRVCAKQLGELCTERDPCDPHKGLFCHFGSPANRKIGVCTAKDGAPCIFGGTVYRSGESFQSSCKYQCTCLDGAVGCMPLCSMDVRLPSPDCPFPRRVKLPGKCCEEWVCDEPKDQTVVGPALAAYRLEDTFGPDPTMIRANCLVQTTEWSACSKTCGMGISTRVTNDNASCRLEKQSRLCMVRPCEADLEENIKKGKKCIRTPKISKPIKFELSGCTSMKTYRAKFCGVCTDGRCCTPHRTTTLPVEFKCPDGEVMKKNMMFIKTCACHYNCPGDNDIFESLYYRKMYGDMA.

An N-terminal signal peptide occupies residues 1 to 26; sequence MTAASMGPVRVAFVVLLALCSRPAVG. The IGFBP N-terminal domain occupies 27–98; that stretch reads QNCSGPCRCP…NRKIGVCTAK (72 aa). A glycan (N-linked (GlcNAc...) asparagine) is linked at Asn28. Disulfide bonds link Cys29–Cys54, Cys33–Cys56, Cys35–Cys57, Cys43–Cys60, Cys68–Cys82, and Cys74–Cys95. The 67-residue stretch at 101–167 folds into the VWFC domain; the sequence is APCIFGGTVY…GKCCEEWVCD (67 aa). Positions 198–243 constitute a TSP type-1 domain; sequence NCLVQTTEWSACSKTCGMGISTRVTNDNASCRLEKQSRLCMVRPCE. Residue Asn225 is glycosylated (N-linked (GlcNAc...) asparagine). The interval 247 to 349 is heparin-binding; that stretch reads EENIKKGKKC…YYRKMYGDMA (103 aa). Intrachain disulfides connect Cys256–Cys293, Cys273–Cys307, Cys284–Cys323, Cys287–Cys325, and Cys292–Cys329. In terms of domain architecture, CTCK spans 256–330; that stretch reads CIRTPKISKP…KTCACHYNCP (75 aa).

Belongs to the CCN family. In terms of assembly, monomer. Interacts with TSKU. In terms of tissue distribution, expressed in bone marrow and thymic cells. Also expressed one of two Wilms tumors tested.

The protein localises to the secreted. It localises to the extracellular space. It is found in the extracellular matrix. Major connective tissue mitoattractant secreted by vascular endothelial cells. Promotes proliferation and differentiation of chondrocytes. Is involved in the stimulation of osteoblast differentiation and has a critical role in osteogenesis. Mediates heparin- and divalent cation-dependent cell adhesion in many cell types including fibroblasts, myofibroblasts, endothelial and epithelial cells. Enhances fibroblast growth factor-induced DNA synthesis. The polypeptide is CCN family member 2 (Homo sapiens (Human)).